The primary structure comprises 278 residues: Shikimate dehydrogenase (NADP(+)) (278 aa).

Shikimate-binding positions include 19-21 and Thr66; that span reads SRS. Catalysis depends on Lys70, which acts as the Proton acceptor. Asp82 contributes to the NADP(+) binding site. Residues Asn91 and Asp107 each coordinate shikimate. Residues 133–137, 157–162, and Ile222 each bind NADP(+); these read GAGGA and NRTRAK. Residue Tyr224 coordinates shikimate. Gly245 lines the NADP(+) pocket.

The protein belongs to the shikimate dehydrogenase family. In terms of assembly, homodimer.

The catalysed reaction is shikimate + NADP(+) = 3-dehydroshikimate + NADPH + H(+). The protein operates within metabolic intermediate biosynthesis; chorismate biosynthesis; chorismate from D-erythrose 4-phosphate and phosphoenolpyruvate: step 4/7. Its function is as follows. Involved in the biosynthesis of the chorismate, which leads to the biosynthesis of aromatic amino acids. Catalyzes the reversible NADPH linked reduction of 3-dehydroshikimate (DHSA) to yield shikimate (SA). The protein is Shikimate dehydrogenase (NADP(+)) of Dinoroseobacter shibae (strain DSM 16493 / NCIMB 14021 / DFL 12).